Reading from the N-terminus, the 123-residue chain is Unclassified hydrophobin 9 (123 aa).

An N-terminal signal peptide occupies residues 1–24 (MFFFNTKPIVFLVVLSVVATFAAA). Cystine bridges form between Cys-37–Cys-103, Cys-45–Cys-97, Cys-46–Cys-88, and Cys-104–Cys-117.

Belongs to the fungal hydrophobin family. Self-assembles to form functional amyloid fibrils called rodlets. Self-assembly into fibrillar rodlets occurs spontaneously at hydrophobic:hydrophilic interfaces and the rodlets further associate laterally to form amphipathic monolayers.

It is found in the secreted. The protein resides in the cell wall. In terms of biological role, aerial growth, conidiation, and dispersal of filamentous fungi in the environment rely upon a capability of their secreting small amphipathic proteins called hydrophobins (HPBs) with low sequence identity. Class I can self-assemble into an outermost layer of rodlet bundles on aerial cell surfaces, conferring cellular hydrophobicity that supports fungal growth, development and dispersal; whereas Class II form highly ordered films at water-air interfaces through intermolecular interactions but contribute nothing to the rodlet structure. The protein is Unclassified hydrophobin 9 of Pleurotus ostreatus (strain PC15) (Oyster mushroom).